The sequence spans 121 residues: Large ribosomal subunit protein uL24 (121 aa).

This sequence belongs to the universal ribosomal protein uL24 family. As to quaternary structure, part of the 50S ribosomal subunit.

In terms of biological role, one of two assembly initiator proteins, it binds directly to the 5'-end of the 23S rRNA, where it nucleates assembly of the 50S subunit. Located at the polypeptide exit tunnel on the outside of the subunit. This is Large ribosomal subunit protein uL24 from Pyrococcus abyssi (strain GE5 / Orsay).